We begin with the raw amino-acid sequence, 311 residues long: MSVKVKDLLKMSRLSQEYGDKVLLEKEIKTSDISRPGLEMTGYFDFYTPERIQLIGMKEWSYLMKMSSHNRHQVLLKMFQPETPVVIIARNLEIPKEMIDAADEKQVAILRSKASTSRLSGEISSYLDSRLAERTSVHGVLMDIYGMGVLIQGDSGIGKSETGLELVKRGHRLVADDRVDIYAKDEVTLWGEPAEILRHLLEIRGVGIIDVMSLYGASAVKDSSQVQIAVYLENYDTQKTFDRLGNDTEELEVAGVRIPRIRIPVKTGRNISVVIEAAAMNYRAKQMGYDATKIFEERLTDLISRNEVKHD.

Residues His138 and Lys159 contribute to the active site. 153-160 (GDSGIGKS) serves as a coordination point for ATP. Residue Ser160 participates in Mg(2+) binding. Asp177 (proton acceptor; for phosphorylation activity. Proton donor; for dephosphorylation activity) is an active-site residue. An important for the catalytic mechanism of both phosphorylation and dephosphorylation region spans residues 201 to 210 (LEIRGVGIID). Glu202 is a binding site for Mg(2+). Residue Arg243 is part of the active site. The important for the catalytic mechanism of dephosphorylation stretch occupies residues 264–269 (PVKTGR).

The protein belongs to the HPrK/P family. In terms of assembly, homohexamer. Mg(2+) is required as a cofactor.

It catalyses the reaction [HPr protein]-L-serine + ATP = [HPr protein]-O-phospho-L-serine + ADP + H(+). The catalysed reaction is [HPr protein]-O-phospho-L-serine + phosphate + H(+) = [HPr protein]-L-serine + diphosphate. Catalyzes the ATP- as well as the pyrophosphate-dependent phosphorylation of a specific serine residue in HPr, a phosphocarrier protein of the phosphoenolpyruvate-dependent sugar phosphotransferase system (PTS). HprK/P also catalyzes the pyrophosphate-producing, inorganic phosphate-dependent dephosphorylation (phosphorolysis) of seryl-phosphorylated HPr (P-Ser-HPr). The two antagonistic activities of HprK/P are regulated by several intracellular metabolites, which change their concentration in response to the absence or presence of rapidly metabolisable carbon sources (glucose, fructose, etc.) in the growth medium. Therefore, by controlling the phosphorylation state of HPr, HPrK/P is a sensor enzyme that plays a major role in the regulation of carbon metabolism and sugar transport: it mediates carbon catabolite repression (CCR), and regulates PTS-catalyzed carbohydrate uptake and inducer exclusion. This chain is HPr kinase/phosphorylase, found in Streptococcus sanguinis (strain SK36).